Here is a 369-residue protein sequence, read N- to C-terminus: Tyrosinase-like protein orsC (369 aa).

An N-terminal signal peptide occupies residues 1-23; it reads MLAFNPLVTALAALIFLFCQANA. Residues H112 and H121 each coordinate Cu cation. N-linked (GlcNAc...) asparagine glycosylation is found at N165, N179, N253, and N272. Residue H315 participates in Cu cation binding.

The protein operates within secondary metabolite biosynthesis. Functionally, tyrosinase-like protein; part of the gene cluster that mediates the biosynthesis of orsellinic acid, as well as of the cathepsin K inhibitors F9775 A and F9775 B. The non-reducing polyketide synthase orsA produces orsellinic acid by condensing acetyl-CoA with 3 malonyl-CoA units. Further modifications by the decarboxylase orsB and the tyrosinase-like protein orsC lead to the production of F9775 A and F9775 B. The functions of orsD and orsE remain unclear since only orsB and orsC are required to convert orsellinic acid into F9775 A and F9775 B. This chain is Tyrosinase-like protein orsC, found in Emericella nidulans (strain FGSC A4 / ATCC 38163 / CBS 112.46 / NRRL 194 / M139) (Aspergillus nidulans).